A 1442-amino-acid chain; its full sequence is Trafficking protein particle complex subunit 10 (1442 aa).

Polar residues predominate over residues 1–23 (MSNVSPNSMNLNGSTSSTASVND). 6 disordered regions span residues 1 to 86 (MSNV…SSSS), 251 to 277 (TSSG…TSTK), 535 to 564 (GSSS…NSGI), 1208 to 1238 (LSSS…NHSK), 1316 to 1335 (QQQQ…QKQQ), and 1422 to 1442 (LQDN…TNKT). Over residues 39–86 (SSSSASSISNSNSSSSNNLKPSTQPLSSSSTLNTPTQFSLQHSSSSSS) the composition is skewed to low complexity. Over residues 535–553 (GSSSSNTPSSTSATTAANG) the composition is skewed to low complexity. The span at 554-564 (KNTPMPSNSGI) shows a compositional bias: polar residues. Positions 1208-1236 (LSSSTSPSSATDSSNSNGNNNNNNNNNNH) are enriched in low complexity. Residues 1425 to 1442 (NNNNNNNSINSQTSTNKT) show a composition bias toward low complexity.

The protein belongs to the TMEM1 family. As to quaternary structure, part of the multisubunit TRAPP (transport protein particle) complex.

It is found in the golgi apparatus. Its subcellular location is the cis-Golgi network. Its function is as follows. May play a role in vesicular transport from endoplasmic reticulum to Golgi. The chain is Trafficking protein particle complex subunit 10 (trapcc10-1) from Dictyostelium discoideum (Social amoeba).